A 352-amino-acid chain; its full sequence is UDP-N-acetylglucosamine--N-acetylmuramyl-(pentapeptide) pyrophosphoryl-undecaprenol N-acetylglucosamine transferase 3 (352 aa).

UDP-N-acetyl-alpha-D-glucosamine contacts are provided by residues 11–13 (SAG), Arg-164, Ser-194, and Gln-289.

Belongs to the glycosyltransferase 28 family. MurG subfamily.

Its subcellular location is the cell membrane. It catalyses the reaction di-trans,octa-cis-undecaprenyl diphospho-N-acetyl-alpha-D-muramoyl-L-alanyl-D-glutamyl-meso-2,6-diaminopimeloyl-D-alanyl-D-alanine + UDP-N-acetyl-alpha-D-glucosamine = di-trans,octa-cis-undecaprenyl diphospho-[N-acetyl-alpha-D-glucosaminyl-(1-&gt;4)]-N-acetyl-alpha-D-muramoyl-L-alanyl-D-glutamyl-meso-2,6-diaminopimeloyl-D-alanyl-D-alanine + UDP + H(+). It functions in the pathway cell wall biogenesis; peptidoglycan biosynthesis. Functionally, cell wall formation. Catalyzes the transfer of a GlcNAc subunit on undecaprenyl-pyrophosphoryl-MurNAc-pentapeptide (lipid intermediate I) to form undecaprenyl-pyrophosphoryl-MurNAc-(pentapeptide)GlcNAc (lipid intermediate II). This is UDP-N-acetylglucosamine--N-acetylmuramyl-(pentapeptide) pyrophosphoryl-undecaprenol N-acetylglucosamine transferase 3 from Bacillus thuringiensis (strain Al Hakam).